A 334-amino-acid chain; its full sequence is Holliday junction branch migration complex subunit RuvB (334 aa).

The segment at 4–184 (ADRIISASPK…FGIVQRLEFY (181 aa)) is large ATPase domain (RuvB-L). Residues I23, R24, G65, K68, T69, T70, 131 to 133 (EDY), R174, Y184, and R221 each bind ATP. A Mg(2+)-binding site is contributed by T69. Positions 185-255 (SVDDLTSIVK…IAKQALAMLD (71 aa)) are small ATPAse domain (RuvB-S). Residues 258–334 (SEGFDFMDIK…YAHLGIAKLD (77 aa)) form a head domain (RuvB-H) region. 3 residues coordinate DNA: R294, R313, and R318.

This sequence belongs to the RuvB family. As to quaternary structure, homohexamer. Forms an RuvA(8)-RuvB(12)-Holliday junction (HJ) complex. HJ DNA is sandwiched between 2 RuvA tetramers; dsDNA enters through RuvA and exits via RuvB. An RuvB hexamer assembles on each DNA strand where it exits the tetramer. Each RuvB hexamer is contacted by two RuvA subunits (via domain III) on 2 adjacent RuvB subunits; this complex drives branch migration. In the full resolvosome a probable DNA-RuvA(4)-RuvB(12)-RuvC(2) complex forms which resolves the HJ.

The protein localises to the cytoplasm. The catalysed reaction is ATP + H2O = ADP + phosphate + H(+). In terms of biological role, the RuvA-RuvB-RuvC complex processes Holliday junction (HJ) DNA during genetic recombination and DNA repair, while the RuvA-RuvB complex plays an important role in the rescue of blocked DNA replication forks via replication fork reversal (RFR). RuvA specifically binds to HJ cruciform DNA, conferring on it an open structure. The RuvB hexamer acts as an ATP-dependent pump, pulling dsDNA into and through the RuvAB complex. RuvB forms 2 homohexamers on either side of HJ DNA bound by 1 or 2 RuvA tetramers; 4 subunits per hexamer contact DNA at a time. Coordinated motions by a converter formed by DNA-disengaged RuvB subunits stimulates ATP hydrolysis and nucleotide exchange. Immobilization of the converter enables RuvB to convert the ATP-contained energy into a lever motion, pulling 2 nucleotides of DNA out of the RuvA tetramer per ATP hydrolyzed, thus driving DNA branch migration. The RuvB motors rotate together with the DNA substrate, which together with the progressing nucleotide cycle form the mechanistic basis for DNA recombination by continuous HJ branch migration. Branch migration allows RuvC to scan DNA until it finds its consensus sequence, where it cleaves and resolves cruciform DNA. The protein is Holliday junction branch migration complex subunit RuvB of Actinobacillus pleuropneumoniae serotype 5b (strain L20).